The following is a 324-amino-acid chain: Phospho-N-acetylmuramoyl-pentapeptide-transferase (324 aa).

Transmembrane regions (helical) follow at residues 5–25, 50–70, 77–97, 117–137, 147–167, 176–196, 203–223, 227–247, 250–270, and 302–322; these read VILF…PILI, GTPT…AIVM, LSAE…LGFL, LIGQ…CHFS, LSID…VGGS, LDGL…ILAW, VAIF…FNAH, VFMG…VAIL, LEIL…SVIL, and VVVT…YIEV.

This sequence belongs to the glycosyltransferase 4 family. MraY subfamily. Mg(2+) serves as cofactor.

It is found in the cell membrane. The catalysed reaction is UDP-N-acetyl-alpha-D-muramoyl-L-alanyl-gamma-D-glutamyl-meso-2,6-diaminopimeloyl-D-alanyl-D-alanine + di-trans,octa-cis-undecaprenyl phosphate = di-trans,octa-cis-undecaprenyl diphospho-N-acetyl-alpha-D-muramoyl-L-alanyl-D-glutamyl-meso-2,6-diaminopimeloyl-D-alanyl-D-alanine + UMP. It participates in cell wall biogenesis; peptidoglycan biosynthesis. Catalyzes the initial step of the lipid cycle reactions in the biosynthesis of the cell wall peptidoglycan: transfers peptidoglycan precursor phospho-MurNAc-pentapeptide from UDP-MurNAc-pentapeptide onto the lipid carrier undecaprenyl phosphate, yielding undecaprenyl-pyrophosphoryl-MurNAc-pentapeptide, known as lipid I. This Bacillus velezensis (strain DSM 23117 / BGSC 10A6 / LMG 26770 / FZB42) (Bacillus amyloliquefaciens subsp. plantarum) protein is Phospho-N-acetylmuramoyl-pentapeptide-transferase.